The following is a 398-amino-acid chain: Membrane-spanning 4-domains subfamily A member 18 (398 aa).

Helical transmembrane passes span 156–176 (LGAI…NPVL), 178–198 (YYPF…SYIV), 218–238 (SISF…IIIT), and 251–271 (AVSG…CVVS). The tract at residues 316 to 346 (TGPVSATNGPVNTTIHPVNTTTSPVNTTTSP) is disordered. The segment covering 319–331 (VSATNGPVNTTIH) has biased composition (polar residues). Residues 332–346 (PVNTTTSPVNTTTSP) show a composition bias toward low complexity.

The protein belongs to the MS4A family.

The protein resides in the membrane. This Homo sapiens (Human) protein is Membrane-spanning 4-domains subfamily A member 18 (MS4A18).